The chain runs to 600 residues: Aspartate--tRNA(Asp/Asn) ligase (600 aa).

Glu-175 contacts L-aspartate. The aspartate stretch occupies residues 199–202; it reads QLFK. Arg-221 is an L-aspartate binding site. ATP is bound by residues 221-223 and Gln-230; that span reads RDE. Residue His-453 coordinates L-aspartate. Glu-487 is a binding site for ATP. Residue Arg-494 coordinates L-aspartate. 539–542 lines the ATP pocket; sequence GWDR. A disordered region spans residues 564 to 600; sequence GGVDPLTDAPAPITPLQRKESGIDAKPKAAENKPEEK. Over residues 580–600 the composition is skewed to basic and acidic residues; the sequence is QRKESGIDAKPKAAENKPEEK.

The protein belongs to the class-II aminoacyl-tRNA synthetase family. Type 1 subfamily. As to quaternary structure, homodimer.

It localises to the cytoplasm. The catalysed reaction is tRNA(Asx) + L-aspartate + ATP = L-aspartyl-tRNA(Asx) + AMP + diphosphate. In terms of biological role, aspartyl-tRNA synthetase with relaxed tRNA specificity since it is able to aspartylate not only its cognate tRNA(Asp) but also tRNA(Asn). Reaction proceeds in two steps: L-aspartate is first activated by ATP to form Asp-AMP and then transferred to the acceptor end of tRNA(Asp/Asn). This is Aspartate--tRNA(Asp/Asn) ligase from Corynebacterium efficiens (strain DSM 44549 / YS-314 / AJ 12310 / JCM 11189 / NBRC 100395).